The sequence spans 416 residues: Gamma-glutamyl phosphate reductase (416 aa).

Belongs to the gamma-glutamyl phosphate reductase family.

It localises to the cytoplasm. It carries out the reaction L-glutamate 5-semialdehyde + phosphate + NADP(+) = L-glutamyl 5-phosphate + NADPH + H(+). It participates in amino-acid biosynthesis; L-proline biosynthesis; L-glutamate 5-semialdehyde from L-glutamate: step 2/2. Catalyzes the NADPH-dependent reduction of L-glutamate 5-phosphate into L-glutamate 5-semialdehyde and phosphate. The product spontaneously undergoes cyclization to form 1-pyrroline-5-carboxylate. This is Gamma-glutamyl phosphate reductase from Streptococcus pyogenes serotype M49 (strain NZ131).